The chain runs to 513 residues: Maturase K (513 aa).

This sequence belongs to the intron maturase 2 family. MatK subfamily.

The protein localises to the plastid. It is found in the chloroplast. Usually encoded in the trnK tRNA gene intron. Probably assists in splicing its own and other chloroplast group II introns. The protein is Maturase K of Astrebla lappacea (Curly Mitchell grass).